The primary structure comprises 275 residues: Phosphate import ATP-binding protein PstB 2 (275 aa).

An ABC transporter domain is found at 29–270 (LEVKNLNIYY…PSEKKTEDYI (242 aa)). 61 to 68 (GPSGCGKS) is an ATP binding site.

This sequence belongs to the ABC transporter superfamily. Phosphate importer (TC 3.A.1.7) family. As to quaternary structure, the complex is composed of two ATP-binding proteins (PstB), two transmembrane proteins (PstC and PstA) and a solute-binding protein (PstS).

It localises to the cell membrane. It carries out the reaction phosphate(out) + ATP + H2O = ADP + 2 phosphate(in) + H(+). Its function is as follows. Part of the ABC transporter complex PstSACB involved in phosphate import. Responsible for energy coupling to the transport system. The polypeptide is Phosphate import ATP-binding protein PstB 2 (Bacillus licheniformis (strain ATCC 14580 / DSM 13 / JCM 2505 / CCUG 7422 / NBRC 12200 / NCIMB 9375 / NCTC 10341 / NRRL NRS-1264 / Gibson 46)).